The chain runs to 609 residues: Glutamine--fructose-6-phosphate aminotransferase [isomerizing] (609 aa).

The Nucleophile; for GATase activity role is filled by Cys2. The Glutamine amidotransferase type-2 domain occupies 2–218 (CGIVGAVAQR…EGDVAEVTRR (217 aa)). SIS domains are found at residues 286-426 (AAEF…HNGM) and 458-599 (LAED…VDQP). Lys604 acts as the For Fru-6P isomerization activity in catalysis.

As to quaternary structure, homodimer.

The protein localises to the cytoplasm. It carries out the reaction D-fructose 6-phosphate + L-glutamine = D-glucosamine 6-phosphate + L-glutamate. Functionally, catalyzes the first step in hexosamine metabolism, converting fructose-6P into glucosamine-6P using glutamine as a nitrogen source. The polypeptide is Glutamine--fructose-6-phosphate aminotransferase [isomerizing] (Shewanella oneidensis (strain ATCC 700550 / JCM 31522 / CIP 106686 / LMG 19005 / NCIMB 14063 / MR-1)).